We begin with the raw amino-acid sequence, 263 residues long: Small ribosomal subunit protein eS4 (263 aa).

One can recognise an S4 RNA-binding domain in the interval 42 to 104 (LPLVIFLRNR…TNELFRLIYD (63 aa)).

Belongs to the eukaryotic ribosomal protein eS4 family.

The polypeptide is Small ribosomal subunit protein eS4 (RpS4) (Bombyx mori (Silk moth)).